The primary structure comprises 700 residues: Polyribonucleotide nucleotidyltransferase (700 aa).

Residues Asp485 and Asp491 each coordinate Mg(2+). A KH domain is found at 552–611 (PRITVIKINPEKIRDVIGKGGAVIRALTEETGTTIELEDDGTVKIASSNGEATKEAIRRI). In terms of domain architecture, S1 motif spans 621–689 (GRIYNGKVIR…RQGRVRLSIK (69 aa)).

It belongs to the polyribonucleotide nucleotidyltransferase family. Component of the RNA degradosome, which is a multiprotein complex involved in RNA processing and mRNA degradation. Requires Mg(2+) as cofactor.

Its subcellular location is the cytoplasm. It catalyses the reaction RNA(n+1) + phosphate = RNA(n) + a ribonucleoside 5'-diphosphate. Its function is as follows. Involved in mRNA degradation. Catalyzes the phosphorolysis of single-stranded polyribonucleotides processively in the 3'- to 5'-direction. In Shewanella baltica (strain OS155 / ATCC BAA-1091), this protein is Polyribonucleotide nucleotidyltransferase.